A 336-amino-acid chain; its full sequence is Tryptophan--tRNA ligase 1 (336 aa).

ATP is bound by residues 9–11 and 17–18; these read KPT and GN. The short motif at 10 to 18 is the 'HIGH' region element; that stretch reads PTGHLTLGN. L-tryptophan is bound at residue aspartate 137. ATP contacts are provided by residues 149-151, valine 188, and 197-201; these read GED and KMGKS. A 'KMSKS' region motif is present at residues 197 to 201; that stretch reads KMGKS.

Belongs to the class-I aminoacyl-tRNA synthetase family. Homodimer.

Its subcellular location is the cytoplasm. The catalysed reaction is tRNA(Trp) + L-tryptophan + ATP = L-tryptophyl-tRNA(Trp) + AMP + diphosphate + H(+). Functionally, catalyzes the attachment of tryptophan to tRNA(Trp). The chain is Tryptophan--tRNA ligase 1 from Streptomyces coelicolor (strain ATCC BAA-471 / A3(2) / M145).